A 535-amino-acid polypeptide reads, in one-letter code: Interferon lambda receptor 1 (535 aa).

An N-terminal signal peptide occupies residues 1–20 (MWRADRWAPLLLFLLQSALG). At 21–227 (RPRLAPPRNV…FLEAPGDKRA (207 aa)) the chain is on the extracellular side. Residues 26–121 (PPRNVTLFSQ…ESRYLEYLFD (96 aa)) form the Fibronectin type-III domain. Residues N29, N36, and N52 are each glycosylated (N-linked (GlcNAc...) asparagine). Cystine bridges form between C73/C81, C85/C149, and C194/C216. N141 carries N-linked (GlcNAc...) asparagine glycosylation. Residues 228 to 248 (VLAMPSLLLLLIAAVAAGVAW) form a helical membrane-spanning segment. At 249 to 535 (KIMKGNPWFQ…GRMLGDYLVR (287 aa)) the chain is on the cytoplasmic side. 2 disordered regions span residues 301–419 (NRPA…APCG) and 478–520 (VNNP…SSVQ). The span at 321–336 (STEDEDEDTDYDDDGD) shows a compositional bias: acidic residues. A compositionally biased stretch (basic and acidic residues) spans 350–360 (EKPRVMEHSET). A compositionally biased stretch (low complexity) spans 376–396 (GSDGSSAWDSSDRSWSSTGDS). The segment covering 397 to 414 (SYKDEVGSSSCLDRKEPD) has biased composition (basic and acidic residues). Residues 482–503 (EGEEEQEDEEEEEEEEEEEDWE) show a composition bias toward acidic residues.

The protein belongs to the type II cytokine receptor family. Heterodimer with IL10RB. In terms of processing, ubiquitinated by FBXO45-containing E3 ligase leading to proteasomal degradation.

The protein resides in the membrane. Functionally, the IFNLR1/IL10RB dimer is a receptor for the cytokine ligands IFNL2 and IFNL3 and mediates their antiviral activity. The ligand/receptor complex stimulate the activation of the JAK/STAT signaling pathway leading to the expression of IFN-stimulated genes (ISG), which contribute to the antiviral state. Determines the cell type specificity of the lambda interferon action. Shows a more restricted pattern of expression in the epithelial tissues thereby limiting responses to lambda interferons primarily to epithelial cells of the respiratory, gastrointestinal, and reproductive tracts. Seems not to be essential for early virus-activated host defense in vaginal infection, but plays an important role in Toll-like receptor (TLR)-induced antiviral defense. Plays a significant role in the antiviral immune defense in the intestinal epithelium. In Mus musculus (Mouse), this protein is Interferon lambda receptor 1 (Ifnlr1).